A 295-amino-acid polypeptide reads, in one-letter code: G1/S-specific cyclin-D1 (295 aa).

The region spanning 28 to 152 is the Cyclin N-terminal domain; it reads LRAMLKTEET…LLVNKLKWNL (125 aa). Lysine 269 participates in a covalent cross-link: Glycyl lysine isopeptide (Lys-Gly) (interchain with G-Cter in ubiquitin). The disordered stretch occupies residues 269 to 295; it reads KATEEEGEVEEEAGLACTPTDVRDVDI. Phosphothreonine is present on threonine 286.

This sequence belongs to the cyclin family. Cyclin D subfamily. As to quaternary structure, interacts with either CDK4 or CDK6 protein kinase to form a serine/threonine kinase holoenzyme complex. The cyclin subunit imparts substrate specificity to the complex. Component of the ternary complex CCND1/CDK4/CDKN1B required for nuclear translocation and modulation of CDK4-mediated kinase activity. Interacts directly with CDKN1B. Can form similar complexes with either CDKN1A or CDKN2A. Interacts with UHRF2; the interaction ubiquitinates CCND1 and appears to occur independently of phosphorylation. Interacts with USP2. Interacts (via cyclin N-terminal domain) with INSM1 (via N-terminal region); the interaction competes with the binding of CCND1 to CDK4 during cell cycle progression and inhibits CDK4 activity. Interacts with CDK4; the interaction is prevented with the binding of CCND1 to INSM1 during cell cycle progression. Phosphorylation at Thr-286 by MAP kinases is required for ubiquitination and degradation by the DCX(AMBRA1) complex. It also plays an essential role for recognition by the FBXO31 component of SCF (SKP1-cullin-F-box) protein ligase complex following DNA damage. In terms of processing, ubiquitinated at Lys-269 by the DCX(AMBRA1) complex during the transition from G1 to S cell phase, leading to its degradation: ubiquitination is dependent on Thr-286 phosphorylation. The DCX(AMBRA1) complex represents the major regulator of CCND1 stability during the G1/S transition. Also ubiquitinated by the SCF(FBXO4) and Cul7-RING(FBXW8) ubiquitin-protein ligase complexes. Following DNA damage it is ubiquitinated by the SCF(FBXO31) protein ligase complex. SCF(FBXO31) ubiquitination is dependent on Thr-286 phosphorylation. Ubiquitinated also by UHRF2 apparently in a phosphorylation-independent manner. Ubiquitination leads to its degradation and G1 arrest. Deubiquitinated by USP2; leading to its stabilization.

It localises to the nucleus. Its subcellular location is the cytoplasm. The protein resides in the nucleus membrane. Its function is as follows. Regulatory component of the cyclin D1-CDK4 (DC) complex that phosphorylates and inhibits members of the retinoblastoma (RB) protein family including RB1 and regulates the cell-cycle during G(1)/S transition. Phosphorylation of RB1 allows dissociation of the transcription factor E2F from the RB/E2F complex and the subsequent transcription of E2F target genes which are responsible for the progression through the G(1) phase. Hypophosphorylates RB1 in early G(1) phase. Cyclin D-CDK4 complexes are major integrators of various mitogenenic and antimitogenic signals. Also a substrate for SMAD3, phosphorylating SMAD3 in a cell-cycle-dependent manner and repressing its transcriptional activity. Component of the ternary complex, cyclin D1/CDK4/CDKN1B, required for nuclear translocation and activity of the cyclin D-CDK4 complex. Exhibits transcriptional corepressor activity with INSM1 on the NEUROD1 and INS promoters in a cell cycle-independent manner. This is G1/S-specific cyclin-D1 (Ccnd1) from Rattus norvegicus (Rat).